Here is a 513-residue protein sequence, read N- to C-terminus: Histidine ammonia-lyase (513 aa).

Residues 144–146 constitute a cross-link (5-imidazolinone (Ala-Gly)); that stretch reads ASG. S145 is modified (2,3-didehydroalanine (Ser)).

The protein belongs to the PAL/histidase family. Contains an active site 4-methylidene-imidazol-5-one (MIO), which is formed autocatalytically by cyclization and dehydration of residues Ala-Ser-Gly.

It localises to the cytoplasm. It catalyses the reaction L-histidine = trans-urocanate + NH4(+). It functions in the pathway amino-acid degradation; L-histidine degradation into L-glutamate; N-formimidoyl-L-glutamate from L-histidine: step 1/3. The protein is Histidine ammonia-lyase of Streptococcus sanguinis (strain SK36).